Consider the following 513-residue polypeptide: Glutamate--tRNA ligase 2 (513 aa).

The 'HIGH' region motif lies at 11–21; the sequence is PSPTGFLHIGS. A 'KMSKS' region motif is present at residues 240–244; sequence KLSKR. Lys-243 contributes to the ATP binding site. The RPE1 insert domain occupies 335–383; that stretch reads NTLLRHLPYREEFGGNTERSTAAYIDIREDASTGLTYKLPLAVELPKKF.

Belongs to the class-I aminoacyl-tRNA synthetase family. Glutamate--tRNA ligase type 1 subfamily. Monomer.

The protein localises to the cytoplasm. It catalyses the reaction tRNA(Glu) + L-glutamate + ATP = L-glutamyl-tRNA(Glu) + AMP + diphosphate. Its function is as follows. Catalyzes the attachment of glutamate to tRNA(Glu) in a two-step reaction: glutamate is first activated by ATP to form Glu-AMP and then transferred to the acceptor end of tRNA(Glu). The protein is Glutamate--tRNA ligase 2 of Rickettsia conorii (strain ATCC VR-613 / Malish 7).